The primary structure comprises 595 residues: MDEVQMETARIQSPKSYLYTTLATTHLGEIASCIISILISNGRLTAREISNRTKIPTKNIKSALVSLIQLNCIYYWQEEKDRKFYYSLKETGLLLFVYSGDIINHIKRQYGEDEAEIIQNILIHGHVKIEDYLTQFNHDKSMKIDQENKFLKLFNDNWLIKLQDYHFHSLDDIWHKIFEECLKDTPRSSVTSEIKRVAEAQAKAKVKLNTLLESGTTGGGDIFTEVNGMKKLKPDLVVTFNLSRFQKHLRTNAFVNMVRSKIGVLTAIVYDAALRYIENKSPPMDYPLLDIPGLINDPKDVKEYILSIENKLVNEKKITFSARDIQRLLPKDIDFKNSVITPTFAKPKRPLENGSSPTLKKIKLEDGIASSTSTSTSTSSSTSSNGTSIDLNTLEQHLKLLLNGTNTAFVNEISPGNYTIPFSHLTNILKQNNFEALVKATLGDYAFRILRCVKSMKLCDEKSICNGALLKEKTVRSELYHLIKANIIEIQEVPRSADRAASKTFYLFRHKSNSNFNYLKNCLIYDMAEILNRIQDFKLEHKILLEKYKLVEGQEDQYLLDRELKLLNDLQLREIKNLVKFQRIKSLYSLYSLVD.

Residues Leu-523–Leu-544 are leucine-zipper.

This sequence belongs to the RNA polymerase beta chain family. Component of the RNA polymerase III (Pol III) complex consisting of 17 subunits.

Its subcellular location is the nucleus. Functionally, DNA-dependent RNA polymerase catalyzes the transcription of DNA into RNA using the four ribonucleoside triphosphates as substrates. Specific core component of RNA polymerase III which synthesizes small RNAs, such as 5S rRNA and tRNAs. This Candida albicans (strain SC5314 / ATCC MYA-2876) (Yeast) protein is DNA-directed RNA polymerase III subunit RPC3 (RPC82).